The following is a 557-amino-acid chain: Dihydroxy-acid dehydratase (557 aa).

Asp-78 provides a ligand contact to Mg(2+). Position 119 (Cys-119) interacts with [2Fe-2S] cluster. Mg(2+)-binding residues include Asp-120 and Lys-121. An N6-carboxylysine modification is found at Lys-121. [2Fe-2S] cluster is bound at residue Cys-192. Position 442 (Glu-442) interacts with Mg(2+). Ser-468 functions as the Proton acceptor in the catalytic mechanism.

It belongs to the IlvD/Edd family. As to quaternary structure, homodimer. [2Fe-2S] cluster is required as a cofactor. Requires Mg(2+) as cofactor.

The enzyme catalyses (2R)-2,3-dihydroxy-3-methylbutanoate = 3-methyl-2-oxobutanoate + H2O. It catalyses the reaction (2R,3R)-2,3-dihydroxy-3-methylpentanoate = (S)-3-methyl-2-oxopentanoate + H2O. It functions in the pathway amino-acid biosynthesis; L-isoleucine biosynthesis; L-isoleucine from 2-oxobutanoate: step 3/4. It participates in amino-acid biosynthesis; L-valine biosynthesis; L-valine from pyruvate: step 3/4. Functions in the biosynthesis of branched-chain amino acids. Catalyzes the dehydration of (2R,3R)-2,3-dihydroxy-3-methylpentanoate (2,3-dihydroxy-3-methylvalerate) into 2-oxo-3-methylpentanoate (2-oxo-3-methylvalerate) and of (2R)-2,3-dihydroxy-3-methylbutanoate (2,3-dihydroxyisovalerate) into 2-oxo-3-methylbutanoate (2-oxoisovalerate), the penultimate precursor to L-isoleucine and L-valine, respectively. The sequence is that of Dihydroxy-acid dehydratase from Bacillus mycoides (strain KBAB4) (Bacillus weihenstephanensis).